We begin with the raw amino-acid sequence, 285 residues long: 4-diphosphocytidyl-2-C-methyl-D-erythritol kinase (285 aa).

The active site involves lysine 9. 89–99 (PLGAGLGGGSS) lines the ATP pocket. Aspartate 131 is a catalytic residue.

It belongs to the GHMP kinase family. IspE subfamily.

The catalysed reaction is 4-CDP-2-C-methyl-D-erythritol + ATP = 4-CDP-2-C-methyl-D-erythritol 2-phosphate + ADP + H(+). Its pathway is isoprenoid biosynthesis; isopentenyl diphosphate biosynthesis via DXP pathway; isopentenyl diphosphate from 1-deoxy-D-xylulose 5-phosphate: step 3/6. Its function is as follows. Catalyzes the phosphorylation of the position 2 hydroxy group of 4-diphosphocytidyl-2C-methyl-D-erythritol. The chain is 4-diphosphocytidyl-2-C-methyl-D-erythritol kinase from Thermodesulfovibrio yellowstonii (strain ATCC 51303 / DSM 11347 / YP87).